Reading from the N-terminus, the 98-residue chain is Peptides MS9.1 (98 aa).

An N-terminal signal peptide occupies residues 1–21 (MKQSLILAVLCLALVFATIEA). A propeptide spanning residues 22-27 (KPKADP) is cleaved from the precursor. Cystine bridges form between Cys-34/Cys-46 and Cys-37/Cys-52. 2 consecutive propeptides follow at residues 63–64 (DP) and 92–98 (DPVRDAE).

Belongs to the sea anemone BBH family.

The protein resides in the secreted. The protein localises to the nematocyst. Functionally, acts as a positive modulator of mammalian TRPA1, a non-selective cation channel involved in detection of pain, in vitro yet has an analgesic and anti-inflammatory effect in vivo. This chain is Peptides MS9.1, found in Metridium senile (Brown sea anemone).